The following is an 864-amino-acid chain: DNA mismatch repair protein MutS (864 aa).

Residue 613–620 participates in ATP binding; it reads GPNMGGKS.

It belongs to the DNA mismatch repair MutS family.

Its function is as follows. This protein is involved in the repair of mismatches in DNA. It is possible that it carries out the mismatch recognition step. This protein has a weak ATPase activity. This Actinobacillus pleuropneumoniae serotype 3 (strain JL03) protein is DNA mismatch repair protein MutS.